A 247-amino-acid polypeptide reads, in one-letter code: Uridylate kinase (247 aa).

15–18 is an ATP binding site; that stretch reads KLSG. An involved in allosteric activation by GTP region spans residues 23-28; it reads GEEGFG. UMP is bound at residue Gly57. Positions 58 and 62 each coordinate ATP. UMP-binding positions include Asp77 and 138–145; that span reads TGNPFFTT. Residues Thr165, Tyr171, and Asp174 each contribute to the ATP site.

This sequence belongs to the UMP kinase family. As to quaternary structure, homohexamer.

It localises to the cytoplasm. The catalysed reaction is UMP + ATP = UDP + ADP. The protein operates within pyrimidine metabolism; CTP biosynthesis via de novo pathway; UDP from UMP (UMPK route): step 1/1. With respect to regulation, allosterically activated by GTP. Inhibited by UTP. In terms of biological role, catalyzes the reversible phosphorylation of UMP to UDP. The sequence is that of Uridylate kinase from Pseudoalteromonas atlantica (strain T6c / ATCC BAA-1087).